Consider the following 607-residue polypeptide: Glutamine--fructose-6-phosphate aminotransferase [isomerizing] (607 aa).

Cysteine 2 (nucleophile; for GATase activity) is an active-site residue. Residues 2–217 (CGIIGIIGND…DGDWAVLTRN (216 aa)) form the Glutamine amidotransferase type-2 domain. SIS domains are found at residues 283–422 (IGID…ARGA) and 455–597 (VCHD…VDQP). The active-site For Fru-6P isomerization activity is the lysine 602.

Homodimer.

The protein localises to the cytoplasm. The enzyme catalyses D-fructose 6-phosphate + L-glutamine = D-glucosamine 6-phosphate + L-glutamate. Its function is as follows. Catalyzes the first step in hexosamine metabolism, converting fructose-6P into glucosamine-6P using glutamine as a nitrogen source. This Brucella melitensis biotype 1 (strain ATCC 23456 / CCUG 17765 / NCTC 10094 / 16M) protein is Glutamine--fructose-6-phosphate aminotransferase [isomerizing].